A 273-amino-acid polypeptide reads, in one-letter code: Dermonecrotic toxin LapSicTox-alphaIB1c (273 aa).

Histidine 5 is a catalytic residue. Mg(2+)-binding residues include glutamate 25 and aspartate 27. The active-site Nucleophile is the histidine 41. Disulfide bonds link cysteine 45-cysteine 51 and cysteine 47-cysteine 190. Residue aspartate 85 participates in Mg(2+) binding. Residue asparagine 250 is glycosylated (N-linked (GlcNAc...) asparagine).

The protein belongs to the arthropod phospholipase D family. Class II subfamily. Mg(2+) is required as a cofactor. As to expression, expressed by the venom gland.

The protein localises to the secreted. It carries out the reaction an N-(acyl)-sphingosylphosphocholine = an N-(acyl)-sphingosyl-1,3-cyclic phosphate + choline. The enzyme catalyses an N-(acyl)-sphingosylphosphoethanolamine = an N-(acyl)-sphingosyl-1,3-cyclic phosphate + ethanolamine. It catalyses the reaction a 1-acyl-sn-glycero-3-phosphocholine = a 1-acyl-sn-glycero-2,3-cyclic phosphate + choline. The catalysed reaction is a 1-acyl-sn-glycero-3-phosphoethanolamine = a 1-acyl-sn-glycero-2,3-cyclic phosphate + ethanolamine. In terms of biological role, dermonecrotic toxins cleave the phosphodiester linkage between the phosphate and headgroup of certain phospholipids (sphingolipid and lysolipid substrates), forming an alcohol (often choline) and a cyclic phosphate. This toxin acts on sphingomyelin (SM). It may also act on ceramide phosphoethanolamine (CPE), lysophosphatidylcholine (LPC) and lysophosphatidylethanolamine (LPE), but not on lysophosphatidylserine (LPS), and lysophosphatidylglycerol (LPG). It acts by transphosphatidylation, releasing exclusively cyclic phosphate products as second products. Induces dermonecrosis, hemolysis, increased vascular permeability, edema, inflammatory response, and platelet aggregation. The sequence is that of Dermonecrotic toxin LapSicTox-alphaIB1c from Loxosceles apachea (Apache recluse spider).